Reading from the N-terminus, the 432-residue chain is Tol-Pal system protein TolB (432 aa).

An N-terminal signal peptide occupies residues M1–A22.

The protein belongs to the TolB family. The Tol-Pal system is composed of five core proteins: the inner membrane proteins TolA, TolQ and TolR, the periplasmic protein TolB and the outer membrane protein Pal. They form a network linking the inner and outer membranes and the peptidoglycan layer.

Its subcellular location is the periplasm. Its function is as follows. Part of the Tol-Pal system, which plays a role in outer membrane invagination during cell division and is important for maintaining outer membrane integrity. The polypeptide is Tol-Pal system protein TolB (Marinomonas sp. (strain MWYL1)).